The primary structure comprises 208 residues: Small ribosomal subunit protein uS4 (208 aa).

An S4 RNA-binding domain is found at 98–158 (RRLDNVVYRL…EKNRKISVVA (61 aa)).

This sequence belongs to the universal ribosomal protein uS4 family. Part of the 30S ribosomal subunit. Contacts protein S5. The interaction surface between S4 and S5 is involved in control of translational fidelity.

In terms of biological role, one of the primary rRNA binding proteins, it binds directly to 16S rRNA where it nucleates assembly of the body of the 30S subunit. Its function is as follows. With S5 and S12 plays an important role in translational accuracy. The chain is Small ribosomal subunit protein uS4 from Lawsonia intracellularis (strain PHE/MN1-00).